The following is a 316-amino-acid chain: Ornithine carbamoyltransferase (316 aa).

Residues 57–60 (STRT), glutamine 84, arginine 108, and 135–138 (HPCQ) each bind carbamoyl phosphate. Residues asparagine 166, aspartate 230, and 234–235 (SM) each bind L-ornithine. Carbamoyl phosphate-binding positions include 269 to 270 (CL) and arginine 297.

It belongs to the aspartate/ornithine carbamoyltransferase superfamily. OTCase family.

The protein resides in the cytoplasm. It carries out the reaction carbamoyl phosphate + L-ornithine = L-citrulline + phosphate + H(+). It functions in the pathway amino-acid biosynthesis; L-arginine biosynthesis; L-arginine from L-ornithine and carbamoyl phosphate: step 1/3. Its function is as follows. Reversibly catalyzes the transfer of the carbamoyl group from carbamoyl phosphate (CP) to the N(epsilon) atom of ornithine (ORN) to produce L-citrulline. The sequence is that of Ornithine carbamoyltransferase from Bacillus cereus (strain ZK / E33L).